The chain runs to 173 residues: Nucleoside-triphosphatase THEP1 (173 aa).

Residues 15-22 (GMPGVGKT) and 101-108 (LKIIDEIG) contribute to the ATP site.

This sequence belongs to the THEP1 NTPase family.

It carries out the reaction a ribonucleoside 5'-triphosphate + H2O = a ribonucleoside 5'-diphosphate + phosphate + H(+). Functionally, has nucleotide phosphatase activity towards ATP, GTP, CTP, TTP and UTP. May hydrolyze nucleoside diphosphates with lower efficiency. The polypeptide is Nucleoside-triphosphatase THEP1 (Pyrobaculum aerophilum (strain ATCC 51768 / DSM 7523 / JCM 9630 / CIP 104966 / NBRC 100827 / IM2)).